We begin with the raw amino-acid sequence, 87 residues long: Acyl-CoA-binding protein (87 aa).

Residues 2 to 87 (VSQLFEEKAK…VDQLIAKYSS (86 aa)) enclose the ACB domain. An acyl-CoA-binding positions include 29–33 (YALYK), K51, and K55. Residue K51 forms a Glycyl lysine isopeptide (Lys-Gly) (interchain with G-Cter in ubiquitin) linkage. A Glycyl lysine isopeptide (Lys-Gly) (interchain with G-Cter in ubiquitin) cross-link involves residue K72. Residue Y74 coordinates an acyl-CoA.

It belongs to the ACBP family.

Its function is as follows. Binds medium- and long-chain acyl-CoA esters with very high affinity and may function as an intracellular carrier of acyl-CoA esters. Enhances the in vitro activity of the ceramide synthase complex. The sequence is that of Acyl-CoA-binding protein (ACB1) from Saccharomyces cerevisiae (strain ATCC 204508 / S288c) (Baker's yeast).